Consider the following 349-residue polypeptide: MTEYPHIPVMLEESIQGLGVIPGGRYVDCTLGAGGHSEAILEHSYPGGQLLSIDADPKAIALAAERLKCFGSSVLLVNDNFANLKDICQRYEYMPVHGILFDLGLSSMQLDREESGFSFQTEAPLDMRFSPGQELSAADIVNTYDLAGLSDLIWKYGEEPFSRRIARAILEKRPFKTTTELASVIEKAVGGRHGRIHPATRTFQALRIAVNEELSHLESALAQAQSLLGHGGRLVVISYHSLEDRIVKQYFQKEAKGCICPDDIPQCVCNHKPSLRLINRRVITPSDEEISRNPRSRSAKMRVAERIIQPGEGRFFHSRAKGLVNHVSETGSVRYGQAKHKGVVQRGGS.

Residues 34-36 (GGH), aspartate 54, phenylalanine 81, aspartate 102, and glutamine 109 contribute to the S-adenosyl-L-methionine site.

Belongs to the methyltransferase superfamily. RsmH family.

The protein resides in the cytoplasm. The enzyme catalyses cytidine(1402) in 16S rRNA + S-adenosyl-L-methionine = N(4)-methylcytidine(1402) in 16S rRNA + S-adenosyl-L-homocysteine + H(+). Functionally, specifically methylates the N4 position of cytidine in position 1402 (C1402) of 16S rRNA. This Dehalococcoides mccartyi (strain ATCC BAA-2266 / KCTC 15142 / 195) (Dehalococcoides ethenogenes (strain 195)) protein is Ribosomal RNA small subunit methyltransferase H.